A 327-amino-acid polypeptide reads, in one-letter code: DNA repair and recombination protein RadA (327 aa).

113-120 (GEFGSGKS) provides a ligand contact to ATP.

Belongs to the eukaryotic RecA-like protein family.

Its function is as follows. Involved in DNA repair and in homologous recombination. Binds and assemble on single-stranded DNA to form a nucleoprotein filament. Hydrolyzes ATP in a ssDNA-dependent manner and promotes DNA strand exchange between homologous DNA molecules. The polypeptide is DNA repair and recombination protein RadA (Ignicoccus hospitalis (strain KIN4/I / DSM 18386 / JCM 14125)).